The chain runs to 168 residues: uncharacterized protein (168 aa).

Disordered regions lie at residues 1–81 (MSSA…GRSW) and 119–150 (RDLSESASTGSENLSRKASNQSQSQGRLSTVA). A compositionally biased stretch (low complexity) spans 7-34 (SRTSRSKATGASSSSISSSIRASPSSSS). A compositionally biased stretch (basic residues) spans 43-67 (TRRRRRRTGRRSTKRSIISPRRRRM). The span at 123-146 (ESASTGSENLSRKASNQSQSQGRL) shows a compositional bias: polar residues.

This is an uncharacterized protein from Human adenovirus C serotype 2 (HAdV-2).